Here is a 132-residue protein sequence, read N- to C-terminus: Fluoride-specific ion channel FluC 2 (132 aa).

Transmembrane regions (helical) follow at residues 8–28, 41–61, 66–86, and 96–116; these read LQLE…GALL, LLVN…PAAP, LLGI…LAAV, and AALG…ALGF. 2 residues coordinate Na(+): Gly-73 and Thr-76.

Belongs to the fluoride channel Fluc/FEX (TC 1.A.43) family.

The protein localises to the cell inner membrane. The catalysed reaction is fluoride(in) = fluoride(out). Its activity is regulated as follows. Na(+) is not transported, but it plays an essential structural role and its presence is essential for fluoride channel function. Fluoride-specific ion channel. Important for reducing fluoride concentration in the cell, thus reducing its toxicity. In Synechococcus sp. (strain CC9605), this protein is Fluoride-specific ion channel FluC 2.